A 126-amino-acid polypeptide reads, in one-letter code: 3-aminobutyryl-CoA ammonia lyase (126 aa).

This sequence belongs to the KAL family. Homohexamer.

The enzyme catalyses (3S)-3-aminobutanoyl-CoA = (2E)-butenoyl-CoA + NH4(+). It participates in amino-acid degradation; L-lysine degradation via acetate pathway. In terms of biological role, involved in the anaerobic fermentation of lysine. Catalyzes the deamination of L-3-aminobutyryl-CoA to produce crotonoyl-CoA. This chain is 3-aminobutyryl-CoA ammonia lyase, found in Acetoanaerobium sticklandii (strain ATCC 12662 / DSM 519 / JCM 1433 / CCUG 9281 / NCIMB 10654 / HF) (Clostridium sticklandii).